A 346-amino-acid polypeptide reads, in one-letter code: Phosphoribosylformylglycinamidine cyclo-ligase (346 aa).

It belongs to the AIR synthase family.

The protein resides in the cytoplasm. The enzyme catalyses 2-formamido-N(1)-(5-O-phospho-beta-D-ribosyl)acetamidine + ATP = 5-amino-1-(5-phospho-beta-D-ribosyl)imidazole + ADP + phosphate + H(+). It participates in purine metabolism; IMP biosynthesis via de novo pathway; 5-amino-1-(5-phospho-D-ribosyl)imidazole from N(2)-formyl-N(1)-(5-phospho-D-ribosyl)glycinamide: step 2/2. The chain is Phosphoribosylformylglycinamidine cyclo-ligase from Vibrio vulnificus (strain YJ016).